The following is a 370-amino-acid chain: MTNANVDATQLTTKPSQDGFYMPAEWAAQQAVWMIWPYRPDNWRSAGAYAQATFAKVADAIGGATPVYMGVPQAFLAEAQKVMPSHVTLVEIDSNDCWARDTGPTVVVNAEGECRGVDWGFNAWGGHNGGLYFPWDKDEQVAAQMLKQHGFARYSAPLILEGGSIHVDGEGTCMTTAECLLNANRNPDLTKEQIEALLRDYLNVKQFIWLEEGVYMDETDGHIDNMCCFARPGEVILHWTDDETDPQYPRSKAALDVLQNTVDAQGRKLKIHLLPQPGPLYCTEEESKGVTEGTGVPRTAGERLAGSYVNFLITNDRIVFPLLDPATDDIAAQKLQDIFPEHKIVGVPAREILLGGGNIHCITQQIPSGK.

Cys361 acts as the Amidino-cysteine intermediate in catalysis.

Belongs to the agmatine deiminase family.

It carries out the reaction agmatine + H2O = N-carbamoylputrescine + NH4(+). This chain is Putative agmatine deiminase, found in Shewanella sp. (strain MR-4).